The sequence spans 31 residues: MESFAYILILGLAIATLFFAIAFRDPPKIGK.

A helical membrane pass occupies residues 3–23 (SFAYILILGLAIATLFFAIAF).

Belongs to the PsbT family. PSII is composed of 1 copy each of membrane proteins PsbA, PsbB, PsbC, PsbD, PsbE, PsbF, PsbH, PsbI, PsbJ, PsbK, PsbL, PsbM, PsbT, PsbX, PsbY, PsbZ, Psb30/Ycf12, peripheral proteins PsbO, CyanoQ (PsbQ), PsbU, PsbV and a large number of cofactors. It forms dimeric complexes.

The protein localises to the cellular thylakoid membrane. Its function is as follows. Found at the monomer-monomer interface of the photosystem II (PS II) dimer, plays a role in assembly and dimerization of PSII. PSII is a light-driven water plastoquinone oxidoreductase, using light energy to abstract electrons from H(2)O, generating a proton gradient subsequently used for ATP formation. In Synechococcus sp. (strain CC9311), this protein is Photosystem II reaction center protein T.